A 391-amino-acid polypeptide reads, in one-letter code: Outer membrane protein 41 (391 aa).

An N-terminal signal peptide occupies residues 1–20 (MKVKYLMLTLVGAIALNASA). Pyrrolidone carboxylic acid is present on Q21. One can recognise an OmpA-like domain in the interval 282–391 (TKTENILTEK…WNRVVIVRSK (110 aa)).

The protein belongs to the outer membrane OOP (TC 1.B.6) superfamily. In terms of assembly, disulfide-linked heterodimer with Omp40.

The protein localises to the cell outer membrane. Functionally, may have porin activity and function in peptidoglycan binding. The protein is Outer membrane protein 41 of Porphyromonas gingivalis (strain ATCC BAA-308 / W83).